Consider the following 209-residue polypeptide: PRA1 family protein B1 (209 aa).

An N-acetylalanine modification is found at alanine 2. Transmembrane regions (helical) follow at residues 73 to 93 (LAYFKVNYVAIVSLVLAFSLF), 95 to 115 (HPLSLLVLIGLLGGWMFLYLF), 133 to 153 (ETLLALVLSTIVVVFMTSVGS), 154 to 174 (LLTSALMIGVAIVCVHGAFVV), and 185 to 205 (PANAGLLSFLGGSATSAAAAV).

The protein belongs to the PRA1 family. Can form homodimer. Interacts with PRA1B2, PRA1B3, PRA1B4, PRA1B5, PRA1B6 and PRA1E.

The protein resides in the endosome membrane. Its function is as follows. May be involved in both secretory and endocytic intracellular trafficking in the endosomal/prevacuolar compartments. The chain is PRA1 family protein B1 (PRA1B1) from Arabidopsis thaliana (Mouse-ear cress).